A 709-amino-acid chain; its full sequence is Polyribonucleotide nucleotidyltransferase (709 aa).

Residues aspartate 487 and aspartate 493 each coordinate Mg(2+). Positions 554–613 (PRIHTMKISVEKIKDVIGKGGAVIRQLTEETGTTIEIEDDGTIKIAATDGDQAKEAIRRI) constitute a KH domain. The S1 motif domain maps to 623 to 691 (GVIYTGKVAR…RQGRVRLSMK (69 aa)).

This sequence belongs to the polyribonucleotide nucleotidyltransferase family. As to quaternary structure, component of the RNA degradosome, which is a multiprotein complex involved in RNA processing and mRNA degradation. It depends on Mg(2+) as a cofactor.

The protein localises to the cytoplasm. The catalysed reaction is RNA(n+1) + phosphate = RNA(n) + a ribonucleoside 5'-diphosphate. Involved in mRNA degradation. Catalyzes the phosphorolysis of single-stranded polyribonucleotides processively in the 3'- to 5'-direction. This Vibrio cholerae serotype O1 (strain ATCC 39315 / El Tor Inaba N16961) protein is Polyribonucleotide nucleotidyltransferase.